Consider the following 160-residue polypeptide: Cytochrome b6-f complex subunit 4 (160 aa).

A run of 3 helical transmembrane segments spans residues 36-56, 95-115, and 131-151; these read LLYI…GLAV, LLGV…PFLE, and TIFL…ALPI.

Belongs to the cytochrome b family. PetD subfamily. The 4 large subunits of the cytochrome b6-f complex are cytochrome b6, subunit IV (17 kDa polypeptide, petD), cytochrome f and the Rieske protein, while the 4 small subunits are petG, petL, petM and petN. The complex functions as a dimer.

It is found in the plastid. It localises to the chloroplast thylakoid membrane. In terms of biological role, component of the cytochrome b6-f complex, which mediates electron transfer between photosystem II (PSII) and photosystem I (PSI), cyclic electron flow around PSI, and state transitions. This Anthoceros angustus (Hornwort) protein is Cytochrome b6-f complex subunit 4.